The primary structure comprises 190 residues: Protein GrpE (190 aa).

A disordered region spans residues Met-1–Lys-41.

This sequence belongs to the GrpE family. Homodimer.

It localises to the cytoplasm. Functionally, participates actively in the response to hyperosmotic and heat shock by preventing the aggregation of stress-denatured proteins, in association with DnaK and GrpE. It is the nucleotide exchange factor for DnaK and may function as a thermosensor. Unfolded proteins bind initially to DnaJ; upon interaction with the DnaJ-bound protein, DnaK hydrolyzes its bound ATP, resulting in the formation of a stable complex. GrpE releases ADP from DnaK; ATP binding to DnaK triggers the release of the substrate protein, thus completing the reaction cycle. Several rounds of ATP-dependent interactions between DnaJ, DnaK and GrpE are required for fully efficient folding. In Limosilactobacillus reuteri (strain DSM 20016) (Lactobacillus reuteri), this protein is Protein GrpE.